We begin with the raw amino-acid sequence, 241 residues long: Ribulose-phosphate 3-epimerase 2 (241 aa).

Residue Ser-21 participates in substrate binding. Residues His-46, Asp-48, and His-79 each contribute to the a divalent metal cation site. Catalysis depends on Asp-48, which acts as the Proton acceptor. Substrate is bound by residues His-79, 155 to 158 (GFGG), 192 to 194 (DGG), and 214 to 215 (GS). Position 192 (Asp-192) interacts with a divalent metal cation. The active-site Proton donor is Asp-192.

Belongs to the ribulose-phosphate 3-epimerase family. A divalent metal cation is required as a cofactor.

It catalyses the reaction D-ribulose 5-phosphate = D-xylulose 5-phosphate. It participates in carbohydrate degradation. Catalyzes the reversible epimerization of D-ribulose 5-phosphate to D-xylulose 5-phosphate. This is Ribulose-phosphate 3-epimerase 2 from Cupriavidus necator (strain ATCC 17699 / DSM 428 / KCTC 22496 / NCIMB 10442 / H16 / Stanier 337) (Ralstonia eutropha).